The chain runs to 465 residues: Siroheme synthase (465 aa).

A precorrin-2 dehydrogenase /sirohydrochlorin ferrochelatase region spans residues 1-203 (MDFLPLFHSL…GRPAEAERLL (203 aa)). NAD(+) is bound by residues 22 to 23 (EV) and 43 to 44 (PQ). Ser128 carries the post-translational modification Phosphoserine. Residues 217-465 (GEVYLVGAGP…AWFEGAREDA (249 aa)) form a uroporphyrinogen-III C-methyltransferase region. Position 226 (Pro226) interacts with S-adenosyl-L-methionine. Asp249 serves as the catalytic Proton acceptor. Lys271 functions as the Proton donor in the catalytic mechanism. Residues 302–304 (GGD), Ile307, 332–333 (TA), Met384, and Gly413 contribute to the S-adenosyl-L-methionine site.

In the N-terminal section; belongs to the precorrin-2 dehydrogenase / sirohydrochlorin ferrochelatase family. It in the C-terminal section; belongs to the precorrin methyltransferase family.

It carries out the reaction uroporphyrinogen III + 2 S-adenosyl-L-methionine = precorrin-2 + 2 S-adenosyl-L-homocysteine + H(+). The enzyme catalyses precorrin-2 + NAD(+) = sirohydrochlorin + NADH + 2 H(+). The catalysed reaction is siroheme + 2 H(+) = sirohydrochlorin + Fe(2+). Its pathway is cofactor biosynthesis; adenosylcobalamin biosynthesis; precorrin-2 from uroporphyrinogen III: step 1/1. The protein operates within cofactor biosynthesis; adenosylcobalamin biosynthesis; sirohydrochlorin from precorrin-2: step 1/1. It participates in porphyrin-containing compound metabolism; siroheme biosynthesis; precorrin-2 from uroporphyrinogen III: step 1/1. It functions in the pathway porphyrin-containing compound metabolism; siroheme biosynthesis; siroheme from sirohydrochlorin: step 1/1. Its pathway is porphyrin-containing compound metabolism; siroheme biosynthesis; sirohydrochlorin from precorrin-2: step 1/1. In terms of biological role, multifunctional enzyme that catalyzes the SAM-dependent methylations of uroporphyrinogen III at position C-2 and C-7 to form precorrin-2 via precorrin-1. Then it catalyzes the NAD-dependent ring dehydrogenation of precorrin-2 to yield sirohydrochlorin. Finally, it catalyzes the ferrochelation of sirohydrochlorin to yield siroheme. This Pseudomonas aeruginosa (strain ATCC 15692 / DSM 22644 / CIP 104116 / JCM 14847 / LMG 12228 / 1C / PRS 101 / PAO1) protein is Siroheme synthase.